The primary structure comprises 2368 residues: Serine/threonine-protein kinase MEC1 (2368 aa).

Residues 1399-1944 (LLAQRSLETD…LWYITALVNS (546 aa)) form the FAT domain. The PI3K/PI4K catalytic domain occupies 2049–2352 (FGSSYKVFSS…QTETLIQEAT (304 aa)). A G-loop region spans residues 2055-2061 (VFSSLKK). A binding to the RPA complex region spans residues 2140-2368 (SILSTKYESL…KMYIGWLPFW (229 aa)). The tract at residues 2221–2229 (GLGDRHCEN) is catalytic loop. Positions 2241–2265 (HVDFDCLFEKGKRLPVPEIVPFRLT) are activation loop. The 33-residue stretch at 2336–2368 (LVLSVAGQTETLIQEATSEDNLSKMYIGWLPFW) folds into the FATC domain.

This sequence belongs to the PI3/PI4-kinase family. ATM subfamily. Interacts with LCD1, which is required for localization MEC1 to the RPA complex. Interacts directly with the RPA subunits RFA1 and RFA2.

The protein localises to the nucleus. The catalysed reaction is L-seryl-[protein] + ATP = O-phospho-L-seryl-[protein] + ADP + H(+). It catalyses the reaction L-threonyl-[protein] + ATP = O-phospho-L-threonyl-[protein] + ADP + H(+). In terms of biological role, serine/threonine protein kinase which activates checkpoint signaling upon genotoxic stresses such as ionizing radiation (IR), ultraviolet light (UV), or DNA replication stalling, thereby acting as a DNA damage sensor. Recognizes the substrate consensus sequence [ST]-Q. Recruited in complex with protein LCD1 by the single-strand-binding protein complex RPA to DNA lesions in order to initiate the DNA repair by homologous recombination, after the MRX-complex and TEL1 are displaced. Phosphorylates LCD1 and RPA2, a subunit of RPA, involved in DNA replication, repair and recombination. Phosphorylates RAD9, CHK1 and RAD53, which leads to the activation of the CHK1 and RAD53 kinases involved in DNA damage repair cascade. Phosphorylates histone H2A to form H2AS128ph (gamma-H2A) at sites of DNA damage, also involved in the regulation of DNA damage response mechanism. Also phosphorylates SLX4 and RTT107 which are proteins involved in genome stability. Required for cell growth and meiotic recombination. The polypeptide is Serine/threonine-protein kinase MEC1 (MEC1) (Saccharomyces cerevisiae (strain ATCC 204508 / S288c) (Baker's yeast)).